The primary structure comprises 84 residues: Cell division protein CrgA (84 aa).

2 helical membrane passes run 31–51 (VAPVMLAMFLIGLAWIVVFYV) and 60–80 (ALDNWNIVVGFGFIAAGFGVS).

The protein belongs to the CrgA family.

It localises to the cell membrane. In terms of biological role, involved in cell division. Coordinates growth and cell division. Required for the formation of the sporulation septa. The protein is Cell division protein CrgA of Streptomyces avermitilis (strain ATCC 31267 / DSM 46492 / JCM 5070 / NBRC 14893 / NCIMB 12804 / NRRL 8165 / MA-4680).